Reading from the N-terminus, the 100-residue chain is MQIGRVRGTVVSSQKEPSMVGVKFLLLQLIDEAGQPLPQYEVAADGVGAGLDEWVLFSRGSAARQVAGSEKRPVDAVVIGIIDTVSVDNRPLYSKKDQYR.

The region spanning 1–83 (MQIGRVRGTV…VDAVVIGIID (83 aa)) is the BMV domain.

This sequence belongs to the CcmL/EutN family. CcmL subfamily. In terms of assembly, homopentamer. Interacts with full-length CcmM.

The protein localises to the carboxysome. In terms of biological role, probably forms vertices in the carboxysome, a polyhedral inclusion where RuBisCO (ribulose bisphosphate carboxylase, rbcL-rbcS) is sequestered. Has been modeled to induce curvature upon insertion into an otherwise flat hexagonal molecular layer of CcmK subunits. This chain is Carboxysome shell vertex protein CcmL, found in Gloeobacter violaceus (strain ATCC 29082 / PCC 7421).